The primary structure comprises 512 residues: MLVSNGGTGSAHEWDRTTIDYDIEPSSDTHAIEISSNDDYLHPLAQFKKSEEFDEVPTNTLIHEVPSFSDSASNIQSQRNLSPFKELEIVSKKKSEQTFSSAVDFSAINVKNLNLKSGLFDPEPPSYDPDYAFNQRSLQSDPGSDEMFRNFKKSISLEELKSSYKLASAEMCEPETRLSFLQLALQAEKSSSRRNREYVARKKEEAFDYLTSFVSQGNSFFGYSEALYLLAVCYGTGALRTEINEKEAYRLYKMAADLNHVQAAYRVAICLQMGFGVTQNTEEAIHYFFRAASGQHVGAMHRMALIYFRGLMSVKRDPVKAMYYLNLGALEADHEFPQALYDLAELYEHGSSYLDGLLELSPRKAFVLYHIAAKYGLKDAQLRVARCFELGQLECDINLVRSFVWYRRLARKRNPEAMWKLSQFYLNGVDDVIYPNPELANEWAKAAAYKNHHLASTFVQDVGKEDVFEKTSITISNEERKSRNSESLPKKKKRLSMLSFKRSKNRESCIIS.

Sel1-like repeat units follow at residues 224-260 (SEALYLLAVCYGTGALRTEINEKEAYRLYKMAADLNH), 261-296 (VQAAYRVAICLQMGFGVTQNTEEAIHYFFRAASGQH), 297-333 (VGAMHRMALIYFRGLMSVKRDPVKAMYYLNLGALEAD), 337-377 (PQAL…KYGL), 378-414 (KDAQLRVARCFELGQLECDINLVRSFVWYRRLARKRN), and 415-452 (PEAMWKLSQFYLNGVDDVIYPNPELANEWAKAAAYKNH). At cysteine 509 the chain carries Cysteine methyl ester. Cysteine 509 carries the S-farnesyl cysteine lipid modification. Positions 510–512 (IIS) are cleaved as a propeptide — removed in mature form.

It is found in the membrane. Involved in chitin biosynthesis. The protein is Chitin synthase regulatory factor 2 (chr2) of Schizosaccharomyces pombe (strain 972 / ATCC 24843) (Fission yeast).